The chain runs to 216 residues: NKG2-D type II integral membrane protein (216 aa).

Over 1–51 (MGWIRGRRSRHSWEMSEFHNYNLDLKKSDFSTRWQKQRCPVVKSKCRENAS) the chain is Cytoplasmic. A helical; Signal-anchor for type II membrane protein membrane pass occupies residues 52–72 (PFFFCCFIAVAMGIRFIIMVT). Over 73 to 216 (IWSAVFLNSL…NTYICMQRTV (144 aa)) the chain is Extracellular. 4 disulfides stabilise this stretch: C96/C105, C99/C110, C127/C211, and C189/C203. The region spanning 98–213 (PCPKNWICYK…STPNTYICMQ (116 aa)) is the C-type lectin domain. Residues N131, N163, and N202 are each glycosylated (N-linked (GlcNAc...) asparagine).

As to quaternary structure, homodimer; disulfide-linked. Heterohexamer composed of two subunits of KLRK1 and four subunits of HCST/DAP10. Interacts (via transmembrane domain) with HCST/DAP10 (via transmembrane domain); the interaction is required for KLRK1 NK cell surface and induces NK cell-mediated cytotoxicity. Does not interact with TYROBP. Interacts with CEACAM1; recruits PTPN6 that dephosphorylates VAV1. As to expression, expressed in natural killer (NK) cells, CD8(+) alpha-beta and gamma-delta T-cells. Expressed on essentially all CD56+CD3- NK cells from freshly isolated PBMC. Expressed in interferon-producing killer dendritic cells (IKDCs).

The protein localises to the cell membrane. Functionally, functions as an activating and costimulatory receptor involved in immunosurveillance upon binding to various cellular stress-inducible ligands displayed at the surface of autologous tumor cells and virus-infected cells. Provides both stimulatory and costimulatory innate immune responses on activated killer (NK) cells, leading to cytotoxic activity. Acts as a costimulatory receptor for T-cell receptor (TCR) in CD8(+) T-cell-mediated adaptive immune responses by amplifying T-cell activation. Stimulates perforin-mediated elimination of ligand-expressing tumor cells. Signaling involves calcium influx, culminating in the expression of TNF-alpha. Participates in NK cell-mediated bone marrow graft rejection. May play a regulatory role in differentiation and survival of NK cells. Binds to ligands belonging to various subfamilies of MHC class I-related glycoproteins including MICA, MICB, RAET1E, RAET1G, RAET1L/ULBP6, ULBP1, ULBP2, ULBP3 (ULBP2&gt;ULBP1&gt;ULBP3) and ULBP4. The polypeptide is NKG2-D type II integral membrane protein (KLRK1) (Homo sapiens (Human)).